The following is an 84-amino-acid chain: Toxin To5 (84 aa).

Residues 1–19 (MKAIIFFIGCLMLIDLVAG) form the signal peptide. An LCN-type CS-alpha/beta domain is found at 21–82 (RSGYPVTQKG…IWGSYPNNCG (62 aa)). 4 disulfides stabilise this stretch: Cys-31/Cys-81, Cys-35/Cys-57, Cys-43/Cys-62, and Cys-47/Cys-64. Cysteine amide is present on Cys-81.

Expressed by the venom gland.

The protein resides in the secreted. Its function is as follows. Beta toxins bind voltage-independently at site-4 of sodium channels (Nav) and shift the voltage of activation toward more negative potentials thereby affecting sodium channel activation and promoting spontaneous and repetitive firing. In Tityus obscurus (Amazonian scorpion), this protein is Toxin To5.